A 270-amino-acid polypeptide reads, in one-letter code: Metallo-beta-lactamase type 2 (270 aa).

The N-terminal stretch at 1 to 28 (MELPNIMHPVAKLSTALAAALMLSGCMP) is a signal peptide. Residues His120, His122, Asp124, His189, and Cys208 each coordinate Zn(2+). Substrate is bound by residues Lys211 and Asn220. His250 is a binding site for Zn(2+).

It belongs to the metallo-beta-lactamase superfamily. Class-B beta-lactamase family. In terms of assembly, monomer. It depends on Zn(2+) as a cofactor.

It is found in the periplasm. It catalyses the reaction a beta-lactam + H2O = a substituted beta-amino acid. Its activity is regulated as follows. Inhibits by captopril, thiorphan, dimercaprol and tiopronin. This enzyme is not susceptible to inactivation by the beta-lactamase-blocking agents clavulanic acid. Confers resistance to the different beta-lactams antibiotics (penicillin, cephalosporin and carbapenem) via the hydrolysis of the beta-lactam ring. Does not confer resistance to the polymixin colistin or the fluoroquinolone ciprofloxacin. This Klebsiella pneumoniae protein is Metallo-beta-lactamase type 2.